The following is a 141-amino-acid chain: Nucleoside diphosphate kinase (141 aa).

6 residues coordinate ATP: K11, F59, R87, T93, R104, and N114. H117 functions as the Pros-phosphohistidine intermediate in the catalytic mechanism.

Belongs to the NDK family. Homotetramer. Mg(2+) is required as a cofactor.

The protein resides in the cytoplasm. The enzyme catalyses a 2'-deoxyribonucleoside 5'-diphosphate + ATP = a 2'-deoxyribonucleoside 5'-triphosphate + ADP. It catalyses the reaction a ribonucleoside 5'-diphosphate + ATP = a ribonucleoside 5'-triphosphate + ADP. Major role in the synthesis of nucleoside triphosphates other than ATP. The ATP gamma phosphate is transferred to the NDP beta phosphate via a ping-pong mechanism, using a phosphorylated active-site intermediate. This chain is Nucleoside diphosphate kinase, found in Ralstonia pickettii (strain 12J).